A 180-amino-acid polypeptide reads, in one-letter code: MSDINSWCASVLKRVQWQEADTFECSNDLQRYWLLGLDSLSRRLEQHCNVLSVSVLDNTHVNPDKLTVEEEALLSGEVCLRRKVILKGDQQSWVYGRTLIPLSSLQDQPHDLTRQGHTPLGITVFSAQSAHRDKLQVGTIMTERGELFARRSRLWMNNKPMLVAELFLPEAPIYSKEVES.

Substrate is bound by residues Arg-82, Leu-120, and Glu-165.

Belongs to the UbiC family.

It is found in the cytoplasm. The enzyme catalyses chorismate = 4-hydroxybenzoate + pyruvate. The protein operates within cofactor biosynthesis; ubiquinone biosynthesis. In terms of biological role, removes the pyruvyl group from chorismate, with concomitant aromatization of the ring, to provide 4-hydroxybenzoate (4HB) for the ubiquinone pathway. This chain is Probable chorismate pyruvate-lyase, found in Aliivibrio fischeri (strain ATCC 700601 / ES114) (Vibrio fischeri).